The chain runs to 633 residues: Glutathione S-transferase C-terminal domain-containing protein (633 aa).

Positions 130 to 332 (LGFKKTCLKA…QEVPGVKTAA (203 aa)) constitute a GST C-terminal domain. Residues 191–233 (NDDKLRRQKLKQQKADGVGPPLTKGKAKSKVHTQETSEGLDSS) form a disordered region. Residues 224 to 233 (QETSEGLDSS) are compositionally biased toward polar residues. Residue Ser-233 is modified to Phosphoserine.

It belongs to the GSTCD family. In terms of tissue distribution, widely expressed in cell types relevant to airway function, including airway smooth muscle cells and epithelial cells.

It localises to the cytoplasm. The sequence is that of Glutathione S-transferase C-terminal domain-containing protein (GSTCD) from Homo sapiens (Human).